Here is a 186-residue protein sequence, read N- to C-terminus: Ribosome-recycling factor (186 aa).

It belongs to the RRF family.

It is found in the cytoplasm. Its function is as follows. Responsible for the release of ribosomes from messenger RNA at the termination of protein biosynthesis. May increase the efficiency of translation by recycling ribosomes from one round of translation to another. The protein is Ribosome-recycling factor of Chlorobaculum parvum (strain DSM 263 / NCIMB 8327) (Chlorobium vibrioforme subsp. thiosulfatophilum).